The sequence spans 145 residues: uncharacterized protein (145 aa).

Residues 1–20 form the signal peptide; that stretch reads MKTCTVICCTALVLGLTAYA.

This is an uncharacterized protein from Aedes vexans (Inland floodwater mosquito).